A 216-amino-acid polypeptide reads, in one-letter code: Probable nicotinate-nucleotide adenylyltransferase (216 aa).

It belongs to the NadD family.

The enzyme catalyses nicotinate beta-D-ribonucleotide + ATP + H(+) = deamido-NAD(+) + diphosphate. It participates in cofactor biosynthesis; NAD(+) biosynthesis; deamido-NAD(+) from nicotinate D-ribonucleotide: step 1/1. Functionally, catalyzes the reversible adenylation of nicotinate mononucleotide (NaMN) to nicotinic acid adenine dinucleotide (NaAD). In Buchnera aphidicola subsp. Schizaphis graminum (strain Sg), this protein is Probable nicotinate-nucleotide adenylyltransferase.